A 645-amino-acid polypeptide reads, in one-letter code: Meiosis induction protein kinase IME2/SME1 (645 aa).

Residues 1-24 are disordered; the sequence is MVEKRSRQSSSSGSEFSVPPDVDN. The span at 8–17 shows a compositional bias: low complexity; the sequence is QSSSSGSEFS. One can recognise a Protein kinase domain in the interval 38–386; the sequence is YQLIEKLGAG…AQELCEMPFF (349 aa). ATP contacts are provided by residues 44–52 and Lys-67; that span reads LGAGSFGCV. Asp-193 serves as the catalytic Proton acceptor.

It belongs to the protein kinase superfamily. Ser/Thr protein kinase family.

It carries out the reaction L-seryl-[protein] + ATP = O-phospho-L-seryl-[protein] + ADP + H(+). The enzyme catalyses L-threonyl-[protein] + ATP = O-phospho-L-threonyl-[protein] + ADP + H(+). In terms of biological role, protein kinase which is essential for the initiation of meiosis and sporulation. In Saccharomyces cerevisiae (strain ATCC 204508 / S288c) (Baker's yeast), this protein is Meiosis induction protein kinase IME2/SME1 (IME2).